Reading from the N-terminus, the 104-residue chain is UPF0212 protein PH1312 (104 aa).

Belongs to the UPF0212 family.

This chain is UPF0212 protein PH1312, found in Pyrococcus horikoshii (strain ATCC 700860 / DSM 12428 / JCM 9974 / NBRC 100139 / OT-3).